Reading from the N-terminus, the 351-residue chain is Holliday junction branch migration complex subunit RuvB (351 aa).

Residues Met-1–Thr-22 are disordered. Residues Ser-2 to Tyr-185 are large ATPase domain (RuvB-L). Residues Leu-24, Arg-25, Gly-66, Lys-69, Thr-70, Thr-71, Glu-132–Phe-134, Arg-175, Tyr-185, and Arg-222 each bind ATP. Residue Thr-70 participates in Mg(2+) binding. Residues Thr-186–Glu-256 form a small ATPAse domain (RuvB-S) region. Positions Ala-259–Asp-351 are head domain (RuvB-H). DNA is bound by residues Arg-295, Arg-314, and Arg-319.

The protein belongs to the RuvB family. As to quaternary structure, homohexamer. Forms an RuvA(8)-RuvB(12)-Holliday junction (HJ) complex. HJ DNA is sandwiched between 2 RuvA tetramers; dsDNA enters through RuvA and exits via RuvB. An RuvB hexamer assembles on each DNA strand where it exits the tetramer. Each RuvB hexamer is contacted by two RuvA subunits (via domain III) on 2 adjacent RuvB subunits; this complex drives branch migration. In the full resolvosome a probable DNA-RuvA(4)-RuvB(12)-RuvC(2) complex forms which resolves the HJ.

It is found in the cytoplasm. It carries out the reaction ATP + H2O = ADP + phosphate + H(+). Its function is as follows. The RuvA-RuvB-RuvC complex processes Holliday junction (HJ) DNA during genetic recombination and DNA repair, while the RuvA-RuvB complex plays an important role in the rescue of blocked DNA replication forks via replication fork reversal (RFR). RuvA specifically binds to HJ cruciform DNA, conferring on it an open structure. The RuvB hexamer acts as an ATP-dependent pump, pulling dsDNA into and through the RuvAB complex. RuvB forms 2 homohexamers on either side of HJ DNA bound by 1 or 2 RuvA tetramers; 4 subunits per hexamer contact DNA at a time. Coordinated motions by a converter formed by DNA-disengaged RuvB subunits stimulates ATP hydrolysis and nucleotide exchange. Immobilization of the converter enables RuvB to convert the ATP-contained energy into a lever motion, pulling 2 nucleotides of DNA out of the RuvA tetramer per ATP hydrolyzed, thus driving DNA branch migration. The RuvB motors rotate together with the DNA substrate, which together with the progressing nucleotide cycle form the mechanistic basis for DNA recombination by continuous HJ branch migration. Branch migration allows RuvC to scan DNA until it finds its consensus sequence, where it cleaves and resolves cruciform DNA. This Bradyrhizobium diazoefficiens (strain JCM 10833 / BCRC 13528 / IAM 13628 / NBRC 14792 / USDA 110) protein is Holliday junction branch migration complex subunit RuvB.